The sequence spans 199 residues: MRNNKNQMYIIKIFIALAMITGIIFLCLLYSSLTPSKLKIGVKTSNMDDSPKIKFTLIDQEGKKFDSTHLQGHLSLIYFGTTYSLYDNQTLKRVEDIIKILKKENILVQVVFITLDSEHDTSEVLKKYLEKIDDNFIGLTGRVEDIEQLADQFKVFFYTSKIFDVKTNKYELQHSNFVYLISSQGKFLKHYYLGLPKNG.

The protein belongs to the SCO1/2 family.

This is SCO2-like protein RC0042 from Rickettsia conorii (strain ATCC VR-613 / Malish 7).